The sequence spans 250 residues: 2,3-bisphosphoglycerate-dependent phosphoglycerate mutase (250 aa).

R10, H11, N17, G24, R62, E89, Y92, K100, R116, R117, H184, G185, and N186 together coordinate (2R)-2,3-bisphosphoglycerate. H11 serves as the catalytic Tele-phosphohistidine intermediate. A (2R)-3-phosphoglycerate-binding site is contributed by G24. (2R)-3-phosphoglycerate-binding residues include E89, Y92, K100, R116, and R117. Residue E89 is the Proton donor/acceptor of the active site. N186 serves as a coordination point for (2R)-3-phosphoglycerate.

It belongs to the phosphoglycerate mutase family. BPG-dependent PGAM subfamily. In terms of tissue distribution, ubiquitously expressed with the highest expression in the sub-tegumental muscle layer (at protein level). Expressed in the tegument (at protein level).

It localises to the tegument. The enzyme catalyses (2R)-2-phosphoglycerate = (2R)-3-phosphoglycerate. Its pathway is carbohydrate degradation; glycolysis; pyruvate from D-glyceraldehyde 3-phosphate: step 3/5. Strongly activated by 2,3-bisphosphoglycerate (2,3-BPG). Inhibited by vanadate in a dose-dependent manner. Catalyzes interconversion of 3- and 2-phosphoglycerate with 2,3-bisphosphoglycerate (2,3-BPG) as the primer of the reaction. Schistosomula have significant surface phosphoglycerate mutase activity also without 2,3-BPG. Binds human plasminogen and enhances its conversion to active thrombolytic plasmin in the presence of human tissue plasminogen activator (tPA) in vitro. Host-interactive surface protein, which may degrade vascular blood clots surrounding the worm in vivo and thus may help survival of the parasite in its host microenvironment. This is 2,3-bisphosphoglycerate-dependent phosphoglycerate mutase from Schistosoma mansoni (Blood fluke).